The following is a 353-amino-acid chain: MNGTEGPYFYVPMVNTSGIVRSPYEYPQYYLVNPAAYARLGAYMFLLILVGFPINFLTLYVTIEHKKLRTPLNYILLNLAVADLFMVFGGFTTTMYTSMHGYFVLGRLGCNIEGFFATLGGEIALWSLVVLAIERWVVVCKPISNFRFGENHAIMGLAFTWLMALACAAPPLVGWSRYIPEGMQCSCGIDYYTRAEGFNNESFVIYMFVCHFTVPLMVVFFCYGRLLCAVKEAAAAQQESETTQRAEREVTRMVIMMVVAFLVCWLPYASVAWWIFTHQGSEFGPVFMTIPAFFAKSSSIYNPMIYICLNKQFRHCMITTLCCGKNPFEEEEGASTASKTEASSVSSSSVSPA.

Residues 1–36 (MNGTEGPYFYVPMVNTSGIVRSPYEYPQYYLVNPAA) lie on the Extracellular side of the membrane. 2 N-linked (GlcNAc...) asparagine glycosylation sites follow: N2 and N15. The chain crosses the membrane as a helical span at residues 37–61 (YARLGAYMFLLILVGFPINFLTLYV). Residues 62 to 73 (TIEHKKLRTPLN) are Cytoplasmic-facing. Residues 74-96 (YILLNLAVADLFMVFGGFTTTMY) traverse the membrane as a helical segment. Residues 97 to 110 (TSMHGYFVLGRLGC) lie on the Extracellular side of the membrane. Cysteines 110 and 187 form a disulfide. Residues 111–133 (NIEGFFATLGGEIALWSLVVLAI) traverse the membrane as a helical segment. The 'Ionic lock' involved in activated form stabilization signature appears at 134–136 (ERW). Over 134 to 152 (ERWVVVCKPISNFRFGENH) the chain is Cytoplasmic. The helical transmembrane segment at 153 to 173 (AIMGLAFTWLMALACAAPPLV) threads the bilayer. The Extracellular portion of the chain corresponds to 174–202 (GWSRYIPEGMQCSCGIDYYTRAEGFNNES). An N-linked (GlcNAc...) asparagine glycan is attached at N200. Residues 203–224 (FVIYMFVCHFTVPLMVVFFCYG) form a helical membrane-spanning segment. At 225-252 (RLLCAVKEAAAAQQESETTQRAEREVTR) the chain is on the cytoplasmic side. A helical transmembrane segment spans residues 253-274 (MVIMMVVAFLVCWLPYASVAWW). Residues 275–286 (IFTHQGSEFGPV) are Extracellular-facing. The helical transmembrane segment at 287–308 (FMTIPAFFAKSSSIYNPMIYIC) threads the bilayer. K296 carries the post-translational modification N6-(retinylidene)lysine. Residues 309 to 353 (LNKQFRHCMITTLCCGKNPFEEEEGASTASKTEASSVSSSSVSPA) lie on the Cytoplasmic side of the membrane. 2 S-palmitoyl cysteine lipidation sites follow: C322 and C323. The interval 331–353 (EEGASTASKTEASSVSSSSVSPA) is disordered. The segment covering 334-353 (ASTASKTEASSVSSSSVSPA) has biased composition (low complexity).

The protein belongs to the G-protein coupled receptor 1 family. Opsin subfamily. In terms of processing, phosphorylated on some or all of the serine and threonine residues present in the C-terminal region. Contains one covalently linked retinal chromophore.

It is found in the membrane. The protein resides in the cell projection. It localises to the cilium. The protein localises to the photoreceptor outer segment. In terms of biological role, photoreceptor required for image-forming vision at low light intensity. While most salt water fish species use retinal as chromophore, most freshwater fish use 3-dehydroretinal, or a mixture of retinal and 3-dehydroretinal. Light-induced isomerization of 11-cis to all-trans retinal triggers a conformational change that activates signaling via G-proteins. Subsequent receptor phosphorylation mediates displacement of the bound G-protein alpha subunit by arrestin and terminates signaling. The chain is Rhodopsin (rho) from Sarpa salpa (Salema).